The sequence spans 314 residues: Leucotoxin LukE (314 aa).

A signal peptide spans 1–28; it reads MFKKKMLAASLSVGLIAPLASPIQESRA.

Belongs to the aerolysin family. As to quaternary structure, toxicity requires sequential binding and synergistic association of a class S and a class F component which form heterooligomeric complexes. LukE (class S) associates with LukD (class F). LukE can also associate with HlgB.

It localises to the secreted. In terms of biological role, part of a bi-component leucotoxin that acts by forming pores in the membrane of the target cells. LukE-LukD is as effective as the Panton-Valentine leucocidin (PVL) for inducing dermonecrosis when injected in the rabbit skin, but not hemolytic and poorly leucotoxic on human blood cells compared to other leucotoxins expressed by S.aureus. This Staphylococcus aureus protein is Leucotoxin LukE (lukE).